We begin with the raw amino-acid sequence, 472 residues long: Glutamate synthase [NADPH] small chain (472 aa).

The 32-residue stretch at 41-72 folds into the 4Fe-4S ferredoxin-type domain; it reads QDAAAQAHRCLHCGNPYCEWKCPVHNYIPNWL. Residues Cys50, Cys53, Cys58, and Cys62 each contribute to the [4Fe-4S] cluster site.

[4Fe-4S] cluster is required as a cofactor.

It catalyses the reaction 2 L-glutamate + NADP(+) = L-glutamine + 2-oxoglutarate + NADPH + H(+). The protein operates within amino-acid biosynthesis; L-glutamate biosynthesis via GLT pathway; L-glutamate from 2-oxoglutarate and L-glutamine (NADP(+) route): step 1/1. Its pathway is energy metabolism; nitrogen metabolism. In terms of biological role, catalyzes the conversion of L-glutamine and 2-oxoglutarate into two molecules of L-glutamate. This chain is Glutamate synthase [NADPH] small chain, found in Halomonas elongata (strain ATCC 33173 / DSM 2581 / NBRC 15536 / NCIMB 2198 / 1H9).